The primary structure comprises 309 residues: tRNA dimethylallyltransferase 1 (309 aa).

14–21 (GPTASGKS) contributes to the ATP binding site. 16 to 21 (TASGKS) contacts substrate. The interval 39–42 (DSMQ) is interaction with substrate tRNA.

The protein belongs to the IPP transferase family. Monomer. Mg(2+) is required as a cofactor.

It carries out the reaction adenosine(37) in tRNA + dimethylallyl diphosphate = N(6)-dimethylallyladenosine(37) in tRNA + diphosphate. Catalyzes the transfer of a dimethylallyl group onto the adenine at position 37 in tRNAs that read codons beginning with uridine, leading to the formation of N6-(dimethylallyl)adenosine (i(6)A). The sequence is that of tRNA dimethylallyltransferase 1 from Pelobacter propionicus (strain DSM 2379 / NBRC 103807 / OttBd1).